A 209-amino-acid chain; its full sequence is Large ribosomal subunit protein uL3 (209 aa).

A disordered region spans residues 122-151 (AIKRHGQSRGPMSHGSRYHRRPGSMGPVDP).

It belongs to the universal ribosomal protein uL3 family. In terms of assembly, part of the 50S ribosomal subunit. Forms a cluster with proteins L14 and L19.

Functionally, one of the primary rRNA binding proteins, it binds directly near the 3'-end of the 23S rRNA, where it nucleates assembly of the 50S subunit. The protein is Large ribosomal subunit protein uL3 of Bacillus velezensis (strain DSM 23117 / BGSC 10A6 / LMG 26770 / FZB42) (Bacillus amyloliquefaciens subsp. plantarum).